We begin with the raw amino-acid sequence, 607 residues long: LRR receptor kinase SERK2 (607 aa).

The signal sequence occupies residues 1 to 21; that stretch reads MRELRVAVLIIAVSLPSFSAS. At 22–219 the chain is on the extracellular side; sequence DRQGDALYDM…QSGSHSSKIG (198 aa). 2 N-linked (GlcNAc...) asparagine glycosylation sites follow: Asn36 and Asn110. 4 LRR repeats span residues 87–110, 111–135, 136–159, and 160–183; these read LKYL…QFGN, LSSL…LGQL, SKLQ…LAKI, and SSLT…LFQV. Asn149, Asn171, Asn187, and Asn206 each carry an N-linked (GlcNAc...) asparagine glycan. A helical transmembrane segment spans residues 220 to 240; that stretch reads IVLGTVGGVIGLLIVAALFLF. Residues 241-607 lie on the Cytoplasmic side of the membrane; sequence CKGRRKSHLR…QEAIELSGGR (367 aa). Residues 284–563 form the Protein kinase domain; it reads FSERNVLGQG…VVRMLEGEGL (280 aa). ATP-binding positions include 290 to 298 and Lys312; that span reads LGQGGFGKV. The active-site Proton acceptor is the Asp411.

The protein belongs to the protein kinase superfamily. Ser/Thr protein kinase family.

It localises to the cell membrane. The catalysed reaction is L-seryl-[protein] + ATP = O-phospho-L-seryl-[protein] + ADP + H(+). It catalyses the reaction L-threonyl-[protein] + ATP = O-phospho-L-threonyl-[protein] + ADP + H(+). Functionally, may be involved in the regulation of plant growth through the brassinosteroid (BR) signaling pathway. The protein is LRR receptor kinase SERK2 of Oryza sativa subsp. japonica (Rice).